The following is a 2195-amino-acid chain: Genome polyprotein (2195 aa).

Gly-2 carries the N-myristoyl glycine; by host lipid modification. At 2 to 1505 (GAQVSTQKTG…HVSRAFICLQ (1504 aa)) the chain is on the cytoplasmic side. The segment at 567–583 (LLQGDVVEAVENAVARV) is amphipathic alpha-helix. Active-site for protease 2A activity residues include His-882 and Asp-900. Positions 917 and 919 each coordinate Zn(2+). The active-site For protease 2A activity is Cys-971. Zn(2+)-binding residues include Cys-977 and His-979. A membrane-binding region spans residues 1111–1183 (NNGWLKKFTE…EQSAPSQSDQ (73 aa)). The tract at residues 1111-1249 (NNGWLKKFTE…SPGAGKSVAT (139 aa)) is oligomerization. The interval 1132–1136 (SIKIQ) is RNA-binding. Residues 1215–1371 (EKKMSNYIQF…SMYSQNGKIN (157 aa)) form the SF3 helicase domain. Zn(2+) is bound by residues Cys-1379, Cys-1391, and Cys-1396. The segment at 1379–1396 (CDEECCPVNFKRCCPLVC) adopts a C4-type; degenerate zinc-finger fold. The RNA-binding stretch occupies residues 1423 to 1430 (EYNHRHSV). The oligomerization stretch occupies residues 1434 to 1439 (LEALFQ). An intramembrane segment occupies 1506–1521 (ALTTFVSVAGIIYIIY). The Cytoplasmic segment spans residues 1522-2195 (KLFAGFQGAY…TLRRKWLDSF (674 aa)). Tyr-1531 bears the O-(5'-phospho-RNA)-tyrosine mark. Residues 1551-1729 (GPAFEFAVAM…FSAALLKHYF (179 aa)) enclose the Peptidase C3 domain. Residues His-1590, Glu-1621, and Cys-1697 each act as for protease 3C activity in the active site. One can recognise a RdRp catalytic domain in the interval 1960 to 2076 (GHLIAFDYSG…SYPWPIDASL (117 aa)). 2 residues coordinate Mg(2+): Asp-1966 and Asp-2062.

Belongs to the picornaviruses polyprotein family. As to quaternary structure, interacts with capsid protein VP1 and capsid protein VP3 to form heterotrimeric protomers. In terms of assembly, interacts with capsid protein VP0, and capsid protein VP3 to form heterotrimeric protomers. Five protomers subsequently associate to form pentamers which serve as building blocks for the capsid. Interacts with capsid protein VP2, capsid protein VP3 and capsid protein VP4 following cleavage of capsid protein VP0. Interacts with capsid protein VP1 and capsid protein VP3 in the mature capsid. As to quaternary structure, interacts with capsid protein VP0 and capsid protein VP1 to form heterotrimeric protomers. Five protomers subsequently associate to form pentamers which serve as building blocks for the capsid. Interacts with capsid protein VP4 in the mature capsid. Interacts with protein 2C; this interaction may be important for virion morphogenesis. In terms of assembly, interacts with capsid protein VP1 and capsid protein VP3. Homodimer. As to quaternary structure, homohexamer; forms a hexameric ring structure with 6-fold symmetry characteristic of AAA+ ATPases. Interacts (via N-terminus) with host RTN3 (via reticulon domain); this interaction is important for viral replication. Interacts with capsid protein VP3; this interaction may be important for virion morphogenesis. In terms of assembly, interacts with protein 3CD. Homodimer. Interacts with host GBF1. Interacts (via GOLD domain) with host ACBD3 (via GOLD domain); this interaction allows the formation of a viral protein 3A/ACBD3 heterotetramer with a 2:2 stoichiometry, which will stimulate the recruitment of host PI4KB in order to synthesize PI4P at the viral RNA replication sites. As to quaternary structure, interacts with RNA-directed RNA polymerase. In terms of assembly, interacts with protein 3AB and with RNA-directed RNA polymerase. Interacts with Viral protein genome-linked and with protein 3CD. The cofactor is Mg(2+). Post-translationally, specific enzymatic cleavages in vivo by the viral proteases yield processing intermediates and the mature proteins. Myristoylation is required for the formation of pentamers during virus assembly. Further assembly of 12 pentamers and a molecule of genomic RNA generates the provirion. In terms of processing, during virion maturation, immature virions are rendered infectious following cleavage of VP0 into VP4 and VP2. This maturation seems to be an autocatalytic event triggered by the presence of RNA in the capsid and it is followed by a conformational change infectious virion. Post-translationally, myristoylation is required during RNA encapsidation and formation of the mature virus particle. VPg is uridylylated by the polymerase into VPg-pUpU. This acts as a nucleotide-peptide primer for the genomic RNA replication.

The protein resides in the virion. It is found in the host cytoplasm. The protein localises to the host cytoplasmic vesicle membrane. It localises to the host nucleus. The catalysed reaction is a ribonucleoside 5'-triphosphate + H2O = a ribonucleoside 5'-diphosphate + phosphate + H(+). The enzyme catalyses Selective cleavage of Tyr-|-Gly bond in the picornavirus polyprotein.. It carries out the reaction RNA(n) + a ribonucleoside 5'-triphosphate = RNA(n+1) + diphosphate. It catalyses the reaction Selective cleavage of Gln-|-Gly bond in the poliovirus polyprotein. In other picornavirus reactions Glu may be substituted for Gln, and Ser or Thr for Gly.. Its activity is regulated as follows. Replication or transcription is subject to high level of random mutations by the nucleotide analog ribavirin. Functionally, forms an icosahedral capsid of pseudo T=3 symmetry with capsid proteins VP2 and VP3. The capsid is 300 Angstroms in diameter, composed of 60 copies of each capsid protein and enclosing the viral positive strand RNA genome. Capsid protein VP1 mainly forms the vertices of the capsid. Capsid protein VP1 interacts with host cell receptor to provide virion attachment to target host cells. This attachment induces virion internalization. Tyrosine kinases are probably involved in the entry process. After binding to its receptor, the capsid undergoes conformational changes. Capsid protein VP1 N-terminus (that contains an amphipathic alpha-helix) and capsid protein VP4 are externalized. Together, they shape a pore in the host membrane through which viral genome is translocated to host cell cytoplasm. Forms an icosahedral capsid of pseudo T=3 symmetry with capsid proteins VP2 and VP3. The capsid is 300 Angstroms in diameter, composed of 60 copies of each capsid protein and enclosing the viral positive strand RNA genome. In terms of biological role, lies on the inner surface of the capsid shell. After binding to the host receptor, the capsid undergoes conformational changes. Capsid protein VP4 is released, Capsid protein VP1 N-terminus is externalized, and together, they shape a pore in the host membrane through which the viral genome is translocated into the host cell cytoplasm. Its function is as follows. Component of immature procapsids, which is cleaved into capsid proteins VP4 and VP2 after maturation. Allows the capsid to remain inactive before the maturation step. Functionally, cysteine protease that cleaves viral polyprotein and specific host proteins. It is responsible for the autocatalytic cleavage between the P1 and P2 regions, which is the first cleavage occurring in the polyprotein. Also cleaves the host translation initiation factor EIF4G1, in order to shut down the capped cellular mRNA translation. Inhibits the host nucleus-cytoplasm protein and RNA trafficking by cleaving host members of the nuclear pores. Counteracts stress granule formation probably by antagonizing its assembly or promoting its dissassembly. Plays an essential role in the virus replication cycle by acting as a viroporin. Creates a pore in the host endoplasmic reticulum and as a consequence releases Ca2+ in the cytoplasm of infected cell. In turn, high levels of cytoplasmic calcium may trigger membrane trafficking and transport of viral ER-associated proteins to viroplasms, sites of viral genome replication. In terms of biological role, induces and associates with structural rearrangements of intracellular membranes. Displays RNA-binding, nucleotide binding and NTPase activities. May play a role in virion morphogenesis and viral RNA encapsidation by interacting with the capsid protein VP3. Its function is as follows. Localizes the viral replication complex to the surface of membranous vesicles. Together with protein 3CD binds the Cis-Active RNA Element (CRE) which is involved in RNA synthesis initiation. Acts as a cofactor to stimulate the activity of 3D polymerase, maybe through a nucleid acid chaperone activity. Functionally, localizes the viral replication complex to the surface of membranous vesicles. It inhibits host cell endoplasmic reticulum-to-Golgi apparatus transport and causes the disassembly of the Golgi complex, possibly through GBF1 interaction. This would result in depletion of MHC, trail receptors and IFN receptors at the host cell surface. Plays an essential role in viral RNA replication by recruiting ACBD3 and PI4KB at the viral replication sites, thereby allowing the formation of the rearranged membranous structures where viral replication takes place. Acts as a primer for viral RNA replication and remains covalently bound to viral genomic RNA. VPg is uridylylated prior to priming replication into VPg-pUpU. The oriI viral genomic sequence may act as a template for this. The VPg-pUpU is then used as primer on the genomic RNA poly(A) by the RNA-dependent RNA polymerase to replicate the viral genome. During genome replication, the VPg-RNA linkage is removed by the host TDP2, thereby accelerating replication. During the late stage of the replication cycle, host TDP2 is excluded from sites of viral RNA synthesis and encapsidation, allowing for the generation of progeny virions. In terms of biological role, involved in the viral replication complex and viral polypeptide maturation. It exhibits protease activity with a specificity and catalytic efficiency that is different from protease 3C. Protein 3CD lacks polymerase activity. The 3C domain in the context of protein 3CD may have an RNA binding activity. Protein 3CD binds to the 5'UTR of the viral genome. Its function is as follows. Replicates the viral genomic RNA on the surface of intracellular membranes. May form linear arrays of subunits that propagate along a strong head-to-tail interaction called interface-I. Covalently attaches UMP to a tyrosine of VPg, which is used to prime RNA synthesis. The positive stranded RNA genome is first replicated at virus induced membranous vesicles, creating a dsRNA genomic replication form. This dsRNA is then used as template to synthesize positive stranded RNA genomes. ss(+)RNA genomes are either translated, replicated or encapsidated. Functionally, major viral protease that mediates proteolytic processing of the polyprotein. Cleaves host EIF5B, contributing to host translation shutoff. Also cleaves host PABPC1, contributing to host translation shutoff. Cleaves host NLRP1, triggers host N-glycine-mediated degradation of the autoinhibitory NLRP1 N-terminal fragment. The sequence is that of Genome polyprotein from Echovirus 11 (strain Gregory).